The sequence spans 404 residues: Probable RNA polymerase sigma-C factor (404 aa).

The short motif at aspartate 193 to valine 206 is the Polymerase core binding element. The H-T-H motif DNA-binding region spans leucine 362–alanine 381.

Belongs to the sigma-70 factor family.

In terms of biological role, sigma factors are initiation factors that promote the attachment of RNA polymerase to specific initiation sites and are then released. This is Probable RNA polymerase sigma-C factor (sigC) from Synechocystis sp. (strain ATCC 27184 / PCC 6803 / Kazusa).